The primary structure comprises 288 residues: UTP--glucose-1-phosphate uridylyltransferase (288 aa).

Belongs to the UDPGP type 2 family.

The enzyme catalyses alpha-D-glucose 1-phosphate + UTP + H(+) = UDP-alpha-D-glucose + diphosphate. The protein operates within glycolipid metabolism; diglucosyl-diacylglycerol biosynthesis. Catalyzes the formation of UDP-glucose from glucose-1-phosphate and UTP. This is an intermediate step in the biosynthesis of diglucosyl-diacylglycerol (Glc2-DAG), i.e. a glycolipid found in the membrane, which is also used as a membrane anchor for lipoteichoic acid (LTA). The sequence is that of UTP--glucose-1-phosphate uridylyltransferase (gtaB) from Staphylococcus epidermidis (strain ATCC 35984 / DSM 28319 / BCRC 17069 / CCUG 31568 / BM 3577 / RP62A).